The primary structure comprises 539 residues: uncharacterized protein (539 aa).

ABC transporter domains lie at 9-276 and 288-536; these read LEVK…EFKK and IKLE…QEMF. ATP contacts are provided by residues 41–48 and 325–332; these read GKSGAGKS and GTSGAGKT.

It belongs to the ABC transporter superfamily.

This is an uncharacterized protein from Methanocaldococcus jannaschii (strain ATCC 43067 / DSM 2661 / JAL-1 / JCM 10045 / NBRC 100440) (Methanococcus jannaschii).